A 426-amino-acid polypeptide reads, in one-letter code: Serine--tRNA ligase (426 aa).

231–233 (TAE) provides a ligand contact to L-serine. 262–264 (RSE) provides a ligand contact to ATP. Glu285 lines the L-serine pocket. 349 to 352 (EISS) serves as a coordination point for ATP. Ser385 lines the L-serine pocket.

It belongs to the class-II aminoacyl-tRNA synthetase family. Type-1 seryl-tRNA synthetase subfamily. As to quaternary structure, homodimer. The tRNA molecule binds across the dimer.

It localises to the cytoplasm. It carries out the reaction tRNA(Ser) + L-serine + ATP = L-seryl-tRNA(Ser) + AMP + diphosphate + H(+). It catalyses the reaction tRNA(Sec) + L-serine + ATP = L-seryl-tRNA(Sec) + AMP + diphosphate + H(+). Its pathway is aminoacyl-tRNA biosynthesis; selenocysteinyl-tRNA(Sec) biosynthesis; L-seryl-tRNA(Sec) from L-serine and tRNA(Sec): step 1/1. Catalyzes the attachment of serine to tRNA(Ser). Is also able to aminoacylate tRNA(Sec) with serine, to form the misacylated tRNA L-seryl-tRNA(Sec), which will be further converted into selenocysteinyl-tRNA(Sec). The chain is Serine--tRNA ligase from Lysinibacillus sphaericus (strain C3-41).